Reading from the N-terminus, the 1451-residue chain is Copper-transporting ATPase 2 (1451 aa).

Over 1-646 the chain is Cytoplasmic; sequence MPEQERKVTA…KTEIKQWKKS (646 aa). HMA domains lie at 57-123, 142-208, and 256-322; these read TTGV…FEAS, AVVK…FEAA, and ATLP…PGYF. Residues Cys-68, Cys-71, Cys-153, Cys-156, Cys-267, and Cys-270 each contribute to the Cu(+) site. Residues 328–353 form a disordered region; sequence DGLEKESGSSSVPSLGSSQRQQEPGP. Positions 335-345 are enriched in low complexity; that stretch reads GSSSVPSLGSS. One can recognise an HMA 4 domain in the interval 355-421; sequence RTAVLTITGI…AVEDMGFEVS (67 aa). Phosphoserine occurs at positions 469, 471, and 474. 2 HMA domains span residues 481–547 and 557–623; these read QKCF…FEAA and GDIE…FHAS. Residues Cys-492, Cys-495, Cys-568, and Cys-571 each coordinate Cu(+). Residues 647–668 form a helical membrane-spanning segment; sequence FLCSLVFGIPVMGLMIYMLIPS. Topologically, residues 669–690 are extracellular; the sequence is SKPHETMVLDHNIIPGLSVLNL. The chain crosses the membrane as a helical span at residues 691 to 710; sequence IFFILCTFVQFLGGWYFYVQ. At 711-717 the chain is on the cytoplasmic side; that stretch reads AYKSLRH. Residues 718–738 traverse the membrane as a helical segment; it reads KSANMDVLIVLATTIAYAYSL. The Extracellular segment spans residues 739 to 757; that stretch reads VILVVAIAEKAEKSPVTFF. Residues 758-778 traverse the membrane as a helical segment; it reads DTPPMLFVFIALGRWLEHVAK. Topologically, residues 779–912 are cytoplasmic; it reads SKTSEALAKL…KAPIQQLADR (134 aa). A helical transmembrane segment spans residues 913–935; the sequence is FSGYFVPFIIIISTLTLVVWIII. Residues 936-965 are Extracellular-facing; sequence GFVDFGIVQKYFPSPSKHISQTEVIIRFAF. The chain crosses the membrane as a helical span at residues 966–987; sequence QTSITVLCIACPCSLGLATPTA. The Cytoplasmic segment spans residues 988–1310; sequence VMVGTGVAAQ…LSKRTVRRIR (323 aa). The active-site 4-aspartylphosphate intermediate is Asp-1020. Mg(2+)-binding residues include Asp-1255 and Asp-1259. Residues 1311–1328 traverse the membrane as a helical segment; it reads VNLVLALIYNMVGIPIAA. Residues 1329-1339 lie on the Extracellular side of the membrane; it reads GVFMPIGIVLQ. A helical transmembrane segment spans residues 1340 to 1357; it reads PWMGSAAASSVSVVLSSL. The Cytoplasmic portion of the chain corresponds to 1358 to 1451; the sequence is QLKCYRKPDL…LSDRDEEQCI (94 aa). Phosphoserine is present on residues Ser-1384 and Ser-1443.

It belongs to the cation transport ATPase (P-type) (TC 3.A.3) family. Type IB subfamily. Monomer. Interacts with COMMD1/MURR1. Interacts with DCTN4, in a copper-dependent manner. Interacts with ATOX1. Interacts (via C-terminus) with ZBTB16/PLZF. As to expression, expressed in brain, liver, kidney, spleen and stomach. In brain, detected in neuronal cells of the hippocampal formation, olfactory bulbs, cerebellum, cerebral cortex and nuclei in the brainstem. Isoform PINA is expressed during night in adult pineal gland (pinealocytes) and retina. Isoform PINA is not detected in other tissue.

The protein resides in the golgi apparatus. It localises to the trans-Golgi network membrane. Its subcellular location is the late endosome. It carries out the reaction Cu(+)(in) + ATP + H2O = Cu(+)(out) + ADP + phosphate + H(+). Functionally, copper ion transmembrane transporter involved in the export of copper out of the cells, such as the efflux of hepatic copper into the bile. The chain is Copper-transporting ATPase 2 (Atp7b) from Rattus norvegicus (Rat).